We begin with the raw amino-acid sequence, 317 residues long: WD repeat-containing protein 82 (317 aa).

WD repeat units follow at residues 21-60 (ENTD…QSRT), 107-146 (GHTK…CQGL), 148-186 (HLSG…KGPF), 194-233 (EKEC…PLQT), 238-278 (PNNK…KVSV), and 282-317 (DHPG…EEGL).

This sequence belongs to the WD repeat SWD2 family. As to quaternary structure, component of the SET1 complex, composed at least of the catalytic subunit Set1, wds/WDR5, Wdr82, Rbbp5, ash2, Cfp1/CXXC1, hcf and Dpy-30L1. Interacts with male-specific lethal (MSL) histone acetyltransferase complex at least composed of mof, msl-1, msl-2 and msl-3. Interacts with su(sable).

Its subcellular location is the nucleus. Functionally, component of the SET1 complex that specifically di- and trimethylates 'Lys-4' of histone H3. Together with su(sable), part of a transcription termination checkpoint that promotes transcription termination of aberrant RNAs and their subsequent degradation by the nuclear exosome. The protein is WD repeat-containing protein 82 of Drosophila melanogaster (Fruit fly).